The chain runs to 572 residues: Arginine--tRNA ligase (572 aa).

The 'HIGH' region signature appears at 121–131 (PNLAKEMHVGH).

This sequence belongs to the class-I aminoacyl-tRNA synthetase family. As to quaternary structure, monomer.

It localises to the cytoplasm. It catalyses the reaction tRNA(Arg) + L-arginine + ATP = L-arginyl-tRNA(Arg) + AMP + diphosphate. The sequence is that of Arginine--tRNA ligase from Chromobacterium violaceum (strain ATCC 12472 / DSM 30191 / JCM 1249 / CCUG 213 / NBRC 12614 / NCIMB 9131 / NCTC 9757 / MK).